Consider the following 341-residue polypeptide: N-acetyl-gamma-glutamyl-phosphate reductase (341 aa).

Residue Cys-148 is part of the active site.

The protein belongs to the NAGSA dehydrogenase family. Type 1 subfamily.

It localises to the cytoplasm. The enzyme catalyses N-acetyl-L-glutamate 5-semialdehyde + phosphate + NADP(+) = N-acetyl-L-glutamyl 5-phosphate + NADPH + H(+). Its pathway is amino-acid biosynthesis; L-arginine biosynthesis; N(2)-acetyl-L-ornithine from L-glutamate: step 3/4. Catalyzes the NADPH-dependent reduction of N-acetyl-5-glutamyl phosphate to yield N-acetyl-L-glutamate 5-semialdehyde. This chain is N-acetyl-gamma-glutamyl-phosphate reductase, found in Pseudothermotoga lettingae (strain ATCC BAA-301 / DSM 14385 / NBRC 107922 / TMO) (Thermotoga lettingae).